A 2087-amino-acid chain; its full sequence is Rho GTPase-activating protein 32 (2087 aa).

The region spanning 131-245 is the PX; atypical domain; it reads GSIQLSLSEE…LTWMEIDNKG (115 aa). Residues 259–321 enclose the SH3 domain; the sequence is PAVGAAHVIK…PGHCVELINQ (63 aa). Residues 372-567 form the Rho-GAP domain; the sequence is CDLGEHLLNS…FILNHVDVLF (196 aa). Phosphoserine is present on residues S706, S709, S732, and S738. Residues 818–858 are disordered; the sequence is FLDSPGYSKDKPSANKKDAETGSSQCQTPGSTASSEPVSPL. Residues 825 to 837 show a composition bias toward basic and acidic residues; that stretch reads SKDKPSANKKDAE. Polar residues predominate over residues 838–854; the sequence is TGSSQCQTPGSTASSEP. 3 positions are modified to phosphoserine: S852, S856, and S892. The segment covering 927-938 has biased composition (low complexity); that stretch reads SNTTAQNASSST. 3 disordered regions span residues 927–1038, 1103–1143, and 1169–1257; these read SNTT…PPKN, PAEQ…EQHH, and VPLD…ENTS. S952 bears the Phosphoserine mark. Composition is skewed to low complexity over residues 994–1005 and 1019–1029; these read SVSSSQSKAVAS and QDSVPVSSVSL. The span at 1124–1138 shows a compositional bias: polar residues; the sequence is TTATGDPTHSNTTES. Over residues 1172–1182 the composition is skewed to basic and acidic residues; sequence DSEKSDDHVSF. Polar residues predominate over residues 1188 to 1203; it reads GKNSMPTVSFLDQDQS. S1203 bears the Phosphoserine mark. A compositionally biased stretch (basic and acidic residues) spans 1222–1232; it reads DKLHHPLEFAD. The tract at residues 1391–1711 is interaction with GAB2; it reads RVPLLHLRAE…YSYAGLAPRP (321 aa). Asymmetric dimethylarginine is present on residues R1523 and R1533. S1585 carries the post-translational modification Phosphoserine. The interaction with FYN stretch occupies residues 1685 to 2087; sequence PNRDFAFYNP…QHPETQIHAE (403 aa). Residues 1798–1896 are disordered; sequence PGKTGLLSVA…QFCESKNGPP (99 aa). Residues 1823–1838 are compositionally biased toward basic and acidic residues; it reads GEDRFYRRHPEAEMDR. Positions 1847–1862 are enriched in polar residues; sequence STQPEKPSLPQKQSSL. The span at 1875–1889 shows a compositional bias: basic and acidic residues; it reads PEHRAHQEASHRQFC. The residue at position 2037 (R2037) is an Omega-N-methylarginine.

This sequence belongs to the PX domain-containing GAP family. Interacts with NTRK1 (via cytoplasmic domain); the interaction is independent of the phosphorylation state of NTRK1. Interacts with SHC3 (via SH2 domain). Interacts with RASA1 (via SH3 domain); the interaction is necessary for the Ras activation and cell transforming activities of ARHGAP32. Interacts with GAB1 and GAB2. Interacts with CRK and CRKL. Found in a complex with CRKL and BCAR1; upon EGF stimulation BCAR1 may be replaced by EGFR. Interacts with NCK1 (via SH3 domain); NCK1 recruits phosphorylated BCAR1 to the complex. Isoform 2 interacts with FYN; the interaction appears to be dependent on tyrosine phosphorylation of ARHGAP32. Interacts with EGFR; the interaction requires EGF stimulation and is increased by SHC3. Interacts with CDC42; the interaction requires constitutively active CDC42. Interacts with CTNNB1. Interacts with GRIN2B. Interacts with DLG4 and CDH2. Interacts with GPHN. Isoform 2 is phosphorylated on multiple tyrosine residues by FYN. Phosphorylated tyrosine residues undergo dephosphorylation after stimulation of NMDA receptors. Phosphorylated in vitro by CaMK2 in the presence of calmodulin and calcium; which inhibits GAP activity. As to expression, isoform 1 and isoform 2 are highly expressed in brain and testis. Isoform 1 is also expressed in other tissues such as lung, liver and spleen.

It localises to the postsynaptic density. The protein resides in the cell projection. It is found in the dendritic spine. The protein localises to the cytoplasm. Its subcellular location is the cell cortex. It localises to the endosome membrane. The protein resides in the golgi apparatus membrane. It is found in the endoplasmic reticulum membrane. The protein localises to the membrane. Its function is as follows. GTPase-activating protein (GAP) promoting GTP hydrolysis on RHOA, CDC42 and RAC1 small GTPases. May be involved in the differentiation of neuronal cells during the formation of neurite extensions. Involved in NMDA receptor activity-dependent actin reorganization in dendritic spines. May mediate cross-talks between Ras- and Rho-regulated signaling pathways in cell growth regulation. Isoform 2 has higher GAP activity. This Homo sapiens (Human) protein is Rho GTPase-activating protein 32 (ARHGAP32).